Consider the following 121-residue polypeptide: MIYPQTMLTVADNTGAKKIMCIRVLGGNRKYGKIGDTIIGVVKEAIPNMPIKKSDVVRAIIVRTSKTIRRADGMYIRFDDNAAVIVNMENNPRGTRVFGPVAREIRDKNFSKIVSLAPEVL.

Belongs to the universal ribosomal protein uL14 family. Part of the 50S ribosomal subunit.

It localises to the plastid. Its subcellular location is the chloroplast. In terms of biological role, binds to 23S rRNA. This is Large ribosomal subunit protein uL14c from Thalassiosira pseudonana (Marine diatom).